We begin with the raw amino-acid sequence, 196 residues long: Sesquiterpene phosphatase astK (196 aa).

This sequence belongs to the HAD-like hydrolase superfamily.

It catalyses the reaction (S,S)-drim-8-en-11-yl phosphate + H2O = (S,S)-drim-8-en-11-ol + phosphate. The protein operates within secondary metabolite biosynthesis; terpenoid biosynthesis. Its function is as follows. Sesquiterpene phosphatase; part of the gene cluster that mediates the biosynthesis of astellolides, drimane-type sesquiterpene esters that show antimicrobial, anti-inflammatory, and anti-tumor activities. The first step in astellolide biosynthesis is performed by the sesquiterpene cyclase astC that catalyzes the formation of drimanyl pyrophosphate from farnesyl pyrophosphate. Drimanyl pyrophosphate is then dephosphorylated by the sesquiterpene phosphatase astI to produce drimanyl monophosphate which is further dephosphorylated to drim-8-ene-11-ol by atsK. Drim-8-ene-11-ol is converted to confertifolin, probably by the cytochrome P450 monooxygenase astD and/or the dehydrogenase astE. The cytochrome P450 monooxygenases astB, astF and astJ then hydroxylate confertifolin at C6, C14, or C15 to form trihydroxy confertifolin. The nonribosomal peptide synthetase astA catalyzes ester bond formation between trihydroxy contifolin and benzoic acid (BA) or 4-hydroxy benzoic acid (4HBA), leading to the formation of dideacetyl astellolides A and B, respectively. Finally, the O-acetyltransferase astG converts dideacetyl astellolides A and B into deacetyl astellolides A and B. The chain is Sesquiterpene phosphatase astK from Aspergillus oryzae (strain ATCC 42149 / RIB 40) (Yellow koji mold).